The following is a 140-amino-acid chain: Nucleoside diphosphate kinase (140 aa).

6 residues coordinate ATP: Lys-11, Phe-59, Arg-87, Thr-93, Arg-104, and Asn-114. His-117 functions as the Pros-phosphohistidine intermediate in the catalytic mechanism.

The protein belongs to the NDK family. In terms of assembly, homotetramer. The cofactor is Mg(2+).

It is found in the cytoplasm. The enzyme catalyses a 2'-deoxyribonucleoside 5'-diphosphate + ATP = a 2'-deoxyribonucleoside 5'-triphosphate + ADP. It carries out the reaction a ribonucleoside 5'-diphosphate + ATP = a ribonucleoside 5'-triphosphate + ADP. Functionally, major role in the synthesis of nucleoside triphosphates other than ATP. The ATP gamma phosphate is transferred to the NDP beta phosphate via a ping-pong mechanism, using a phosphorylated active-site intermediate. The chain is Nucleoside diphosphate kinase from Roseobacter denitrificans (strain ATCC 33942 / OCh 114) (Erythrobacter sp. (strain OCh 114)).